Here is a 455-residue protein sequence, read N- to C-terminus: Phosphoglucosamine mutase (455 aa).

S104 (phosphoserine intermediate) is an active-site residue. The Mg(2+) site is built by S104, D253, D255, and D257. S104 carries the post-translational modification Phosphoserine.

This sequence belongs to the phosphohexose mutase family. The cofactor is Mg(2+). Activated by phosphorylation.

It catalyses the reaction alpha-D-glucosamine 1-phosphate = D-glucosamine 6-phosphate. Catalyzes the conversion of glucosamine-6-phosphate to glucosamine-1-phosphate. The sequence is that of Phosphoglucosamine mutase from Psychrobacter cryohalolentis (strain ATCC BAA-1226 / DSM 17306 / VKM B-2378 / K5).